We begin with the raw amino-acid sequence, 117 residues long: Large ribosomal subunit protein bL20 (117 aa).

It belongs to the bacterial ribosomal protein bL20 family.

In terms of biological role, binds directly to 23S ribosomal RNA and is necessary for the in vitro assembly process of the 50S ribosomal subunit. It is not involved in the protein synthesizing functions of that subunit. The protein is Large ribosomal subunit protein bL20 of Mesomycoplasma hyopneumoniae (strain J / ATCC 25934 / NCTC 10110) (Mycoplasma hyopneumoniae).